A 121-amino-acid chain; its full sequence is Large ribosomal subunit protein uL18 (121 aa).

This sequence belongs to the universal ribosomal protein uL18 family. In terms of assembly, part of the 50S ribosomal subunit; part of the 5S rRNA/L5/L18/L25 subcomplex. Contacts the 5S and 23S rRNAs.

Functionally, this is one of the proteins that bind and probably mediate the attachment of the 5S RNA into the large ribosomal subunit, where it forms part of the central protuberance. In Bdellovibrio bacteriovorus (strain ATCC 15356 / DSM 50701 / NCIMB 9529 / HD100), this protein is Large ribosomal subunit protein uL18.